The primary structure comprises 461 residues: Tubulin gamma-1 chain (461 aa).

A GTP-binding site is contributed by 142–148; it reads AGGTGSG.

This sequence belongs to the tubulin family.

Its subcellular location is the cytoplasm. It is found in the cytoskeleton. It localises to the microtubule organizing center. The protein resides in the centrosome. Tubulin is the major constituent of microtubules. The gamma chain is found at microtubule organizing centers (MTOC) such as the spindle poles or the centrosome, suggesting that it is involved in the minus-end nucleation of microtubule assembly. In Euplotoides octocarinatus (Freshwater ciliate), this protein is Tubulin gamma-1 chain.